A 459-amino-acid polypeptide reads, in one-letter code: Vacuolar fusion protein CCZ1 homolog (459 aa).

Belongs to the CCZ1 family.

This chain is Vacuolar fusion protein CCZ1 homolog, found in Nematostella vectensis (Starlet sea anemone).